A 227-amino-acid chain; its full sequence is 7-cyano-7-deazaguanine synthase (227 aa).

8-18 (VSGGADSATVL) contributes to the ATP binding site. Positions 192, 202, 205, and 208 each coordinate Zn(2+).

Belongs to the QueC family. The cofactor is Zn(2+).

It carries out the reaction 7-carboxy-7-deazaguanine + NH4(+) + ATP = 7-cyano-7-deazaguanine + ADP + phosphate + H2O + H(+). It functions in the pathway purine metabolism; 7-cyano-7-deazaguanine biosynthesis. Its function is as follows. Catalyzes the ATP-dependent conversion of 7-carboxy-7-deazaguanine (CDG) to 7-cyano-7-deazaguanine (preQ(0)). The protein is 7-cyano-7-deazaguanine synthase of Rickettsia canadensis (strain McKiel).